The sequence spans 209 residues: Probable glutathione peroxidase 8 (209 aa).

N-acetylmethionine is present on M1. Residues 18 to 40 (IFAVLLSMVLCTVMLFLLQLKFL) form a helical membrane-spanning segment. The active site involves C79.

Belongs to the glutathione peroxidase family.

It localises to the membrane. It carries out the reaction 2 glutathione + H2O2 = glutathione disulfide + 2 H2O. The protein is Probable glutathione peroxidase 8 (Gpx8) of Mus musculus (Mouse).